The chain runs to 347 residues: Holliday junction branch migration complex subunit RuvB (347 aa).

The tract at residues 1-186 (MKDENSINFL…FGITARFELY (186 aa)) is large ATPase domain (RuvB-L). ATP is bound by residues leucine 25, arginine 26, glycine 67, lysine 70, threonine 71, threonine 72, 133–135 (EDY), arginine 176, tyrosine 186, and arginine 223. Threonine 71 is a Mg(2+) binding site. Residues 187 to 257 (SEIELVEIIK…IVAIGLEMLR (71 aa)) are small ATPAse domain (RuvB-S). The interval 260–347 (GEGLDEQDRN…NLNENQRVSF (88 aa)) is head domain (RuvB-H). DNA contacts are provided by arginine 315 and arginine 320.

The protein belongs to the RuvB family. Homohexamer. Forms an RuvA(8)-RuvB(12)-Holliday junction (HJ) complex. HJ DNA is sandwiched between 2 RuvA tetramers; dsDNA enters through RuvA and exits via RuvB. An RuvB hexamer assembles on each DNA strand where it exits the tetramer. Each RuvB hexamer is contacted by two RuvA subunits (via domain III) on 2 adjacent RuvB subunits; this complex drives branch migration. In the full resolvosome a probable DNA-RuvA(4)-RuvB(12)-RuvC(2) complex forms which resolves the HJ.

The protein resides in the cytoplasm. It catalyses the reaction ATP + H2O = ADP + phosphate + H(+). Its function is as follows. The RuvA-RuvB-RuvC complex processes Holliday junction (HJ) DNA during genetic recombination and DNA repair, while the RuvA-RuvB complex plays an important role in the rescue of blocked DNA replication forks via replication fork reversal (RFR). RuvA specifically binds to HJ cruciform DNA, conferring on it an open structure. The RuvB hexamer acts as an ATP-dependent pump, pulling dsDNA into and through the RuvAB complex. RuvB forms 2 homohexamers on either side of HJ DNA bound by 1 or 2 RuvA tetramers; 4 subunits per hexamer contact DNA at a time. Coordinated motions by a converter formed by DNA-disengaged RuvB subunits stimulates ATP hydrolysis and nucleotide exchange. Immobilization of the converter enables RuvB to convert the ATP-contained energy into a lever motion, pulling 2 nucleotides of DNA out of the RuvA tetramer per ATP hydrolyzed, thus driving DNA branch migration. The RuvB motors rotate together with the DNA substrate, which together with the progressing nucleotide cycle form the mechanistic basis for DNA recombination by continuous HJ branch migration. Branch migration allows RuvC to scan DNA until it finds its consensus sequence, where it cleaves and resolves cruciform DNA. The sequence is that of Holliday junction branch migration complex subunit RuvB from Borreliella afzelii (strain PKo) (Borrelia afzelii).